Consider the following 301-residue polypeptide: Protein ARMCX6 (301 aa).

Residues 1-6 form a mitochondrion outer membrane (MOM)-targeting sequence region; the sequence is MGRARE. Topologically, residues 1-7 are mitochondrial intermembrane; the sequence is MGRAREM. The chain crosses the membrane as a helical; Signal-anchor span at residues 8–25; the sequence is GWMAAGLMIGAGACYCMY. Positions 26 to 36 are mitochondrion outer membrane (MOM)-targeting sequence; it reads KLTMGRDEGNE. The Cytoplasmic segment spans residues 26–301; the sequence is KLTMGRDEGN…REMLVEAISP (276 aa). Positions 70 to 105 are disordered; that stretch reads SEDGEWDEPGAPGGTEDRRSGGGKANRAHPTKQRPF.

This sequence belongs to the eutherian X-chromosome-specific Armcx family.

The protein localises to the mitochondrion. The protein resides in the mitochondrion outer membrane. Functionally, may regulate the dynamics and distribution of mitochondria in neural cells. This Rattus norvegicus (Rat) protein is Protein ARMCX6 (Armcx6).